The primary structure comprises 421 residues: Core protease I7 homolog (421 aa).

Residues H242, D249, and C329 contribute to the active site.

It belongs to the peptidase C57 family.

The protein localises to the virion. In terms of biological role, late protein responsible for processing most or all of the viral core and membrane proteins known to undergo morphogenesis-associated proteolysis. These proteolytic events are involved in the transformation of immature virions (IV) into mature virions (MV). This Fowlpox virus (strain NVSL) (FPV) protein is Core protease I7 homolog.